The following is a 278-amino-acid chain: Elongation factor Ts (278 aa).

An involved in Mg(2+) ion dislocation from EF-Tu region spans residues 79 to 82; it reads TDFV.

This sequence belongs to the EF-Ts family.

The protein resides in the cytoplasm. Associates with the EF-Tu.GDP complex and induces the exchange of GDP to GTP. It remains bound to the aminoacyl-tRNA.EF-Tu.GTP complex up to the GTP hydrolysis stage on the ribosome. In Borrelia recurrentis (strain A1), this protein is Elongation factor Ts.